Consider the following 388-residue polypeptide: Muscleblind-like protein 1 (388 aa).

At T6 the chain carries Phosphothreonine. 4 consecutive C3H1-type zinc fingers follow at residues 13–41 (WLTLEVCREFQRGTCSRPDTECKFAHPSK), 47–73 (NGRVIACFDSLKGRCSRENCKYLHPPP), 179–207 (TDRLEVCREYQRGNCNRGENDCRFAHPAD), and 215–241 (DNTVTVCMDYIKGRCSREKCKYFHPPA).

The protein belongs to the muscleblind family. In terms of assembly, interacts with DDX1 and YBX1. Interacts with HNRNPH1; the interaction in RNA-independent. Interacts with RBPMS; the interaction allows cooperative assembly of RNA-bound stable cell-specific alternative splicing regulatory complexes. In terms of tissue distribution, highly expressed in cardiac, skeletal muscle and during myoblast differentiation. Weakly expressed in other tissues (at protein level). Expressed in heart, brain, placenta, lung, liver, skeletal muscle, kidney and pancreas.

Its subcellular location is the nucleus. It is found in the cytoplasm. It localises to the cytoplasmic granule. In terms of biological role, mediates pre-mRNA alternative splicing regulation. Acts either as activator or repressor of splicing on specific pre-mRNA targets. Inhibits cardiac troponin-T (TNNT2) pre-mRNA exon inclusion but induces insulin receptor (IR) pre-mRNA exon inclusion in muscle. Antagonizes the alternative splicing activity pattern of CELF proteins. Regulates the TNNT2 exon 5 skipping through competition with U2AF2. Inhibits the formation of the spliceosome A complex on intron 4 of TNNT2 pre-mRNA. Binds to the stem-loop structure within the polypyrimidine tract of TNNT2 intron 4 during spliceosome assembly. Binds to the 5'-YGCU(U/G)Y-3'consensus sequence. Binds to the IR RNA. Binds to expanded CUG repeat RNA, which folds into a hairpin structure containing GC base pairs and bulged, unpaired U residues. Together with RNA binding proteins RBPMS and RBFOX2, activates vascular smooth muscle cells alternative splicing events. Regulates NCOR2 alternative splicing. The sequence is that of Muscleblind-like protein 1 (MBNL1) from Homo sapiens (Human).